The chain runs to 922 residues: Cell surface glycoprotein 2 (922 aa).

A signal peptide spans 1 to 23 (MTGNSDKVRSLFLTALMVFSVFA). 7 N-linked (GlcNAc...) asparagine glycosylation sites follow: asparagine 37, asparagine 56, asparagine 110, asparagine 220, asparagine 251, asparagine 262, and asparagine 292. Residue asparagine 307 is glycosylated (N-linked (GalNAc...) asparagine). N-linked (GlcNAc...) asparagine glycosylation is found at asparagine 319, asparagine 344, asparagine 396, asparagine 437, asparagine 490, asparagine 523, asparagine 557, asparagine 574, asparagine 587, asparagine 616, asparagine 700, asparagine 717, asparagine 809, asparagine 838, and asparagine 847. The disordered stretch occupies residues 816-899 (PHQDTNGNEE…GTETTEAEGP (84 aa)). The segment covering 835–850 (YTQNGSAVTDSANVTV) has biased composition (polar residues). Residues 853–887 (EEPEDTPEDTPEDTPEDTPEDTPEDTPADTPEDTP) show a composition bias toward acidic residues. Residues 888 to 899 (DTGTETTEAEGP) are compositionally biased toward low complexity. Residues 898-918 (GPGFTAAIALIALVAAALLAV) traverse the membrane as a helical segment. The PGF sorting signal signature appears at 899–901 (PGF).

The protein belongs to the halobacterial S-layer protein family. In terms of processing, N-glycosylated on Asn-307; this N-linked glycan is a branched trisaccharide containing 2-amino-6-sulfo-2,6-dideoxy-glucose (sulfoquinovosamine). Post-translationally, O-glycosylated on Thr residues within the DTPE repeats in the C-terminal region; glycans consist of Glc-Gal disaccharides. Cleaved by the archaeosortase ArtA at the C-terminus, with removal of a short hydrophobic segment. In terms of processing, lipidation.

The protein localises to the secreted. It is found in the cell wall. Its subcellular location is the S-layer. It localises to the cell membrane. Functionally, S-layer protein. The S-layer is a paracrystalline mono-layered assembly of proteins which coat the surface of the cell. In H.hispanica, the S-layer contains two different glycoproteins, Slg1 and Slg2, which share highly similar amino acid sequences. In Haloarcula hispanica (strain ATCC 33960 / DSM 4426 / JCM 8911 / NBRC 102182 / NCIMB 2187 / VKM B-1755), this protein is Cell surface glycoprotein 2.